Consider the following 1468-residue polypeptide: Centrosomal protein of 290 kDa (1468 aa).

Coiled coils occupy residues 1–25 (ERQLRKENGKQKNELMAMEAEVGEK), 52–121 (SLSE…IEQA), 172–292 (KMYE…DEKA), 318–528 (VASK…EAQK), 559–592 (RIILETQATCRSLEEKLREKESALRLAEENILSR), 627–688 (HTLK…QADN), and 736–1441 (IKLK…SEQF). A self-association (with itself or N-terminus) region spans residues 1060-1468 (TTGLTVDQVM…QENPVNFPIY (409 aa)). A disordered region spans residues 1130-1152 (LSKDAYSRPSTSGIDSDDHYQRE).

As to quaternary structure, part of the tectonic-like complex (also named B9 complex). Interacts with ATF4 via its N-terminal region. Associates with the BBSome complex, interacting (via N-terminus) with BBS4. Interacts with IQCB1/NPHP5; IQCB1 and CEP290/NPHP6 are proposed to form a functional NPHP5-6 module localized to the centrosome. Interacts with NPHP4; the interaction likely requires additional interactors. Interacts with ZNF423, FAM161A, CEP162, CEP162, CEP131, TALPID3, CCDC13, CC2D2A, RPGRIP1. Can self-associate (homo- or heteromeric). Interacts with CCP110; required for suppressing cilia formation. Interacts with RPGR. Associates (via C-terminus) with microtubules; association to microtubule is reduced in response to cellular stress, such as ultraviolet light (UV) radiation or heat shock, in a process that requires p38 MAP kinase signaling. Interacts with FAM161A. Interacts with PCM1. Interacts with CCDC66. Interacts with ARMC9 and CSPP1. Post-translationally, ubiquitinated. May undergo monoubiquitination; monoubiquitination is inhibited in response to cellular stress, such as ultraviolet light (UV) radiation or heat shock, but does not cause its displacement from centriolar satellites.

The protein resides in the cytoplasm. It is found in the cytoskeleton. Its subcellular location is the microtubule organizing center. The protein localises to the centrosome. It localises to the centriolar satellite. The protein resides in the nucleus. It is found in the cell projection. Its subcellular location is the cilium. The protein localises to the cilium basal body. It localises to the centriole. The protein resides in the cytoplasmic vesicle. In terms of biological role, involved in early and late steps in cilia formation. Its association with CCP110 is required for inhibition of primary cilia formation by CCP110. May play a role in early ciliogenesis in the disappearance of centriolar satellites and in the transition of primary ciliar vesicles (PCVs) to capped ciliary vesicles (CCVs). Required for the centrosomal recruitment of RAB8A and for the targeting of centriole satellite proteins to centrosomes such as of PCM1. Required for the correct localization of ciliary and phototransduction proteins in retinal photoreceptor cells; may play a role in ciliary transport processes. Required for efficient recruitment of RAB8A to primary cilium. In the ciliary transition zone is part of the tectonic-like complex which is required for tissue-specific ciliogenesis and may regulate ciliary membrane composition. Involved in regulation of the BBSome complex integrity, specifically for presence of BBS2, BBS5 and BBS8/TTC8 in the complex, and in ciliary targeting of selected BBSome cargos. May play a role in controlling entry of the BBSome complex to cilia possibly implicating IQCB1/NPHP5. Activates ATF4-mediated transcription. In Bos taurus (Bovine), this protein is Centrosomal protein of 290 kDa (CEP290).